We begin with the raw amino-acid sequence, 206 residues long: Ras-related protein Rab-14 (206 aa).

15-22 (GDMGVGKS) contributes to the GTP binding site. The Effector region motif lies at 37-45 (SPHTIGVEF). GTP contacts are provided by residues 63-67 (DTAGQ) and 121-124 (NKKD). A disordered region spans residues 182–206 (PDGGITKNPPQTITDKPQDASKCSC). A compositionally biased stretch (polar residues) spans 189–206 (NPPQTITDKPQDASKCSC). Residues Cys204 and Cys206 are each lipidated (S-geranylgeranyl cysteine). A Cysteine methyl ester modification is found at Cys206.

Belongs to the small GTPase superfamily. Rab family.

Its subcellular location is the endosome. The protein resides in the contractile vacuole. The protein localises to the membrane. The catalysed reaction is GTP + H2O = GDP + phosphate + H(+). Rab activation is generally mediated by a guanine exchange factor (GEF), while inactivation through hydrolysis of bound GTP is catalyzed by a GTPase activating protein (GAP). That Rab is activated by the DENND6A and DENND6B guanine exchange factors (GEF). The small GTPases Rab are key regulators of intracellular membrane trafficking, from the formation of transport vesicles to their fusion with membranes. Rabs cycle between an inactive GDP-bound form and an active GTP-bound form that is able to recruit to membranes different set of downstream effectors directly responsible for vesicle formation, movement, tethering and fusion. Regulates the fusion of phagosomes and lysosomes. In Dictyostelium discoideum (Social amoeba), this protein is Ras-related protein Rab-14 (rab14).